The sequence spans 94 residues: Co-chaperonin GroES (94 aa).

The protein belongs to the GroES chaperonin family. In terms of assembly, heptamer of 7 subunits arranged in a ring. Interacts with the chaperonin GroEL.

The protein resides in the cytoplasm. In terms of biological role, together with the chaperonin GroEL, plays an essential role in assisting protein folding. The GroEL-GroES system forms a nano-cage that allows encapsulation of the non-native substrate proteins and provides a physical environment optimized to promote and accelerate protein folding. GroES binds to the apical surface of the GroEL ring, thereby capping the opening of the GroEL channel. The chain is Co-chaperonin GroES from Lactobacillus helveticus (strain DPC 4571).